A 435-amino-acid chain; its full sequence is Enolase (435 aa).

Residue Gln163 participates in (2R)-2-phosphoglycerate binding. Glu205 serves as the catalytic Proton donor. Residues Asp243, Glu292, and Asp319 each coordinate Mg(2+). (2R)-2-phosphoglycerate contacts are provided by Lys344, Arg373, Ser374, and Lys395. Lys344 acts as the Proton acceptor in catalysis.

It belongs to the enolase family. Mg(2+) serves as cofactor.

It is found in the cytoplasm. The protein localises to the secreted. Its subcellular location is the cell surface. The enzyme catalyses (2R)-2-phosphoglycerate = phosphoenolpyruvate + H2O. The protein operates within carbohydrate degradation; glycolysis; pyruvate from D-glyceraldehyde 3-phosphate: step 4/5. Functionally, catalyzes the reversible conversion of 2-phosphoglycerate (2-PG) into phosphoenolpyruvate (PEP). It is essential for the degradation of carbohydrates via glycolysis. The protein is Enolase of Streptococcus uberis (strain ATCC BAA-854 / 0140J).